We begin with the raw amino-acid sequence, 82 residues long: Delta-actitoxin-Aeq2b 1 (82 aa).

An N-terminal signal peptide occupies residues 1–19 (MNRLMILVFAAVILALASA). A propeptide spanning residues 20-26 (DEDVDIA) is cleaved from the precursor. Intrachain disulfides connect Cys32-Cys79, Cys34-Cys69, and Cys62-Cys80.

The protein belongs to the sea anemone sodium channel inhibitory toxin family. Type I subfamily.

The protein localises to the secreted. Its subcellular location is the nematocyst. Functionally, binds specifically to voltage-gated sodium channels (Nav), thereby delaying their inactivation during signal transduction. Causes death to crabs. The chain is Delta-actitoxin-Aeq2b 1 from Actinia equina (Beadlet anemone).